The sequence spans 147 residues: D-aminoacyl-tRNA deacylase (147 aa).

Residues 136-137 carry the Gly-cisPro motif, important for rejection of L-amino acids motif; that stretch reads GP.

It belongs to the DTD family. As to quaternary structure, homodimer.

The protein resides in the cytoplasm. It carries out the reaction glycyl-tRNA(Ala) + H2O = tRNA(Ala) + glycine + H(+). The catalysed reaction is a D-aminoacyl-tRNA + H2O = a tRNA + a D-alpha-amino acid + H(+). An aminoacyl-tRNA editing enzyme that deacylates mischarged D-aminoacyl-tRNAs. Also deacylates mischarged glycyl-tRNA(Ala), protecting cells against glycine mischarging by AlaRS. Acts via tRNA-based rather than protein-based catalysis; rejects L-amino acids rather than detecting D-amino acids in the active site. By recycling D-aminoacyl-tRNA to D-amino acids and free tRNA molecules, this enzyme counteracts the toxicity associated with the formation of D-aminoacyl-tRNA entities in vivo and helps enforce protein L-homochirality. This is D-aminoacyl-tRNA deacylase from Streptococcus equi subsp. equi (strain 4047).